The sequence spans 810 residues: Leucine--tRNA ligase (810 aa).

Positions 41-52 match the 'HIGH' region motif; sequence PYPSGQGLHVGH. The 'KMSKS' region motif lies at 582–586; sequence KMSKS. ATP is bound at residue K585.

Belongs to the class-I aminoacyl-tRNA synthetase family.

The protein localises to the cytoplasm. The catalysed reaction is tRNA(Leu) + L-leucine + ATP = L-leucyl-tRNA(Leu) + AMP + diphosphate. The protein is Leucine--tRNA ligase of Oenococcus oeni (strain ATCC BAA-331 / PSU-1).